The chain runs to 730 residues: MSDRFELYLTCPKGLEGLLAEEAKGLGLDDVREHTSAIRGAADMETAYRLCLWSRLANRVLLVLKRFNMKNADDLYDGVNAVDWADHLAADGTLAVEFSGHGSGIDNTHFGALKVKDAIVDKLRNREGLRPSVEKVDPDVRVHLRLDRGEAILSLDLSGHSLHQRGYRLQQGAAPLKENLAAAVLIRAGWPRIAAEGGALADPMCGVGTFLVEAAMIAADMAPNLKRERWGFSAWLGHVPATWRKVHEEAQARAQAGLAKPPLWIRGYEADPRLIQPGRNNVERAGLSEWVKIYQGEVASFEPRPDQNQKGLVISNPPYGERLGDEASLLYLYQNLGERLRQACMGWEAAVFTGAPELGKRMGIRSHKQYAFWNGALPCKLLLFKIQPDQFVTGERREAQADSGDTHRPLPVASEPARLSEGAQMFANRLQKNLKQLGKWARKEQIDCYRVYDADMPEYALAVDLYQDWVHVQEYAAPRSIDPEKAQARLIDALSAIPQALGVDPQRVVLKRRERQSGTRQYERQATEGRFQEVSEGGVRLLVNLTDYLDTGLFLDHRPMRMRIQREAAGKRFLNLFCYTATASVHAAKGGARSTTSVDLSKTYLDWARRNLSLNGFSERNRLEQGDVMAWLEANRDTYDLIFIDPPTFSNSKRMEGVFDVQRDHVQLLDLAMARLAPGGVLYFSNNFRKFQLDEHLAARYVVEEITAQTLDPDFARNNRIHRAWRLQLR.

A THUMP domain is found at 46–157 (TAYRLCLWSR…RGEAILSLDL (112 aa)).

It belongs to the methyltransferase superfamily. RlmKL family.

The protein localises to the cytoplasm. The catalysed reaction is guanosine(2445) in 23S rRNA + S-adenosyl-L-methionine = N(2)-methylguanosine(2445) in 23S rRNA + S-adenosyl-L-homocysteine + H(+). The enzyme catalyses guanosine(2069) in 23S rRNA + S-adenosyl-L-methionine = N(2)-methylguanosine(2069) in 23S rRNA + S-adenosyl-L-homocysteine + H(+). Functionally, specifically methylates the guanine in position 2445 (m2G2445) and the guanine in position 2069 (m7G2069) of 23S rRNA. This is Ribosomal RNA large subunit methyltransferase K/L from Pseudomonas putida (strain W619).